The chain runs to 396 residues: E3 ubiquitin-protein transferase MAEA (396 aa).

Residues 1 to 124 (MAVQESAVQL…AAASVWKRKR (124 aa)) are extracellular and involved in cell to cell contact. The residue at position 28 (Thr28) is a Phosphothreonine. One can recognise a LisH domain in the interval 121 to 153 (KRKRMDRMMVEHLLRCGYYNTAVKLARQSGIED). A CTLH domain is found at 159-216 (MFLTAKEVEESLERRETATCLAWCHDNKSRLRKMKSCLEFSLRIQEFIELIRQNKRLD). An RING-Gid-type zinc finger spans residues 314-381 (CPVCSRSLNK…QDDKVVCPRT (68 aa)).

In terms of assembly, identified in the CTLH complex that contains GID4, RANBP9 and/or RANBP10, MKLN1, MAEA, RMND5A (or alternatively its paralog RMND5B), GID8, ARMC8, WDR26 and YPEL5. Within this complex, MAEA, RMND5A (or alternatively its paralog RMND5B), GID8, WDR26, and RANBP9 and/or RANBP10 form the catalytic core, while GID4, MKLN1, ARMC8 and YPEL5 have ancillary roles. Interacts with F-actin. Autoubiquitinated as component of the CTLH E3 ubiquitin-protein ligase complex (in vitro).

It is found in the cytoplasm. The protein resides in the nucleus. Its subcellular location is the nucleoplasm. It localises to the nucleus matrix. The protein localises to the cell membrane. It is found in the cytoskeleton. The catalysed reaction is S-ubiquitinyl-[E2 ubiquitin-conjugating enzyme]-L-cysteine + [acceptor protein]-L-lysine = [E2 ubiquitin-conjugating enzyme]-L-cysteine + N(6)-ubiquitinyl-[acceptor protein]-L-lysine.. In terms of biological role, core component of the CTLH E3 ubiquitin-protein ligase complex that selectively accepts ubiquitin from UBE2H and mediates ubiquitination and subsequent proteasomal degradation of the transcription factor HBP1. MAEA and RMND5A are both required for catalytic activity of the CTLH E3 ubiquitin-protein ligase complex. MAEA is required for normal cell proliferation. The CTLH E3 ubiquitin-protein ligase complex is not required for the degradation of enzymes involved in gluconeogenesis, such as FBP1. Plays a role in erythroblast enucleation during erythrocyte maturation and in the development of mature macrophages. Mediates the attachment of erythroid cell to mature macrophages; this MAEA-mediated contact inhibits erythroid cell apoptosis. Participates in erythroblastic island formation, which is the functional unit of definitive erythropoiesis. Associates with F-actin to regulate actin distribution in erythroblasts and macrophages. May contribute to nuclear architecture and cells division events. The polypeptide is E3 ubiquitin-protein transferase MAEA (MAEA) (Macaca fascicularis (Crab-eating macaque)).